The primary structure comprises 354 residues: MSLDKIMNEAISPWMKGDGPDSDIVLSSRIRLARNFKKYQFSTMQNEEEAKQIQELFKKEFINKTVEPFGEFELLKMNELTPLQRRVLVEKHLISPNLAGTEYGACLLSENEHISVMLNEEDHIRIQCLFSGLQLSEALQSANQIDNWIEKEVEYAFDESLGYITSCPTNVGTGLRASVMIHLPGLVLTKRISRIIQVIQKLGLVVRGIYGEGSEALGNIFQVSNQMTLGKSEEDIIADLKSVIQQIIQQEKMARELIVQNSSIELEDKVYRSYGILANSRLIQSAEAANCLSDLRLGIDLGYIKGISRNILTELMVLTQPGILQQYAGGPLGPEERDYRRATLIRERLRIEKN.

A Phosphagen kinase C-terminal domain is found at 24-254 (IVLSSRIRLA…QQIIQQEKMA (231 aa)). Residues 27–31 (SSRIR), His-92, Arg-125, 176–180 (RASVM), and 207–212 (RGIYGE) contribute to the ATP site. The short motif at 337-342 (RDYRRA) is the RDXXRA motif of the pArg binding pocket involved in allosteric regulation element.

It belongs to the ATP:guanido phosphotransferase family.

The catalysed reaction is L-arginyl-[protein] + ATP = N(omega)-phospho-L-arginyl-[protein] + ADP + H(+). With respect to regulation, appears to be allosterically activated by the binding of pArg-containing polypeptides to the pArg-binding pocket localized in the C-terminal domain of McsB. In terms of biological role, catalyzes the specific phosphorylation of arginine residues in a large number of proteins. Is part of the bacterial stress response system. Protein arginine phosphorylation has a physiologically important role and is involved in the regulation of many critical cellular processes, such as protein homeostasis, motility, competence, and stringent and stress responses, by regulating gene expression and protein activity. This is Protein-arginine kinase from Bacillus cereus (strain AH187).